Reading from the N-terminus, the 384-residue chain is Terpene cyclase ascI (384 aa).

The signal sequence occupies residues 1–25 (MPQLAGKLILAGLIPLGAWVLHGFA). A helical transmembrane segment spans residues 82–102 (LSLHAFMFAGQGVPLLVLNML). N-linked (GlcNAc...) asparagine glycosylation occurs at N109. 4 consecutive transmembrane segments (helical) span residues 119 to 139 (VFGI…YLFL), 164 to 184 (AVGF…SLPH), 194 to 214 (VLSV…AYFA), and 235 to 255 (GAVY…TFAI). An N-linked (GlcNAc...) asparagine glycan is attached at N258. The next 2 helical transmembrane spans lie at 291–311 (WFLQ…AIGI) and 330–350 (IALR…ALSL). Residue N372 is glycosylated (N-linked (GlcNAc...) asparagine).

The protein belongs to the membrane-bound ascI terpene cyclase family.

Its subcellular location is the membrane. It carries out the reaction 16-hydroxy-ilicicolin A epoxide = ascofuranol. The protein operates within secondary metabolite biosynthesis; terpenoid biosynthesis. Its function is as follows. Epoxide hydrolase; part of the asc-2 gene cluster that mediates the biosynthesis of ascofuranone, a strong inhibitor of cyanide-insensitive alternative oxidases and a promising drug candidate against African trypanosomiasis. The first step in the pathway is performed by the non-reducing polyketide synthase ascC that produces orsellinic acid by condensing acetyl-CoA with 3 malonyl-CoA units. Orsellinic acid is then prenylated by the prenyltransferase ascA to yield ilicicolinic acid B. Ilicicolinic acid B is further reduced to ilicicolin B by the reductase ascB. The halogenase ascD then chlorinates ilicicolin B to produce ilicicolin A which is converted to ilicicolin A epoxide by the cytochrome P450 monooxygenase ascE that catalyzes stereoselective epoxidation of the terminal double bond of the prenyl group. Ilicicolin A epoxide is the last common precursor for the biosynthesis of ascofuranone and ascochlorin. The terpene cyclase ascF produces a monocyclic terpene, and the cyclization reaction is proposed to be initiated by protonation of the terminal epoxide of ilicicolin A epoxide to generate a monocyclic tertiarycation, which is followed by a series of hydride and methyl shifts with abstraction of proton, leading to the formation of the (14S,15R,19R)-trimethylcyclohexanone ring structure of ilicicolin C, which is finally reduced to ascochlorin by the dehydrogenase ascG. On the other hand, ilicicolin A epoxide is hydroxylated by the cytochrome P450 monooxygenase ascH, and the resultant product is cyclized by the terpene cyclase ascI to ascofuranol via protonation-initiated epoxide ring opening, which facilitates the 6-endo-tet cyclization to form the tetrahy-drofuran ring. Finally, ascofuranol is oxidized into ascofuranone by ascJ. This chain is Terpene cyclase ascI, found in Acremonium egyptiacum (Oospora egyptiaca).